We begin with the raw amino-acid sequence, 546 residues long: MAFNFNWSPLMADAGFYTRAQELLTAALNKSPKPPIIVGDITVTELNLGSIPPELEILEIGDLADDRFRGIFKMSYSGDAYLTLKTCVQANSLNTYMVTRPKFTSPCPLAADHGLTIPLQITLSDIKLSGFVVLVFSKQKGITLVFRNDPLESLKVSSTFDSIPFVRDYLQRTIEGQLRLLFMDELPAIIHRLSLRLWVPELRGQDTEVKADEEAGPGQDPLLSPPQDPVDASGNVLSVAQIASLSLDSGVEMHSLFSQRNLVRLATLTDSQRTLSLFTPTIHDVVFRALTGAMEQSESHGGLISPASPPLSRTHSHVASLHSLQESSMSKSSLGSPLSGCGLTMGAGRHPRTRPSRKHKRRVVDLRKPQKLDDTSSTCTDSEYTVSTDASTVFSSSARVGEKPDDPITPPVSPDATIKVKDRSRVPAMQGLGPSVTNKAGQSTPSAEAEKITLSNGEPSYIPHQNTPTIEAHEKGDDNTISLNGVPPSMLSFVAVSQDRSILEQAWMMKLANEISRRIQEGKGPGSVGSNYCGRRDPSPPPAYGQ.

In terms of domain architecture, SMP-LTD spans 1–195 (MAFNFNWSPL…LPAIIHRLSL (195 aa)). Disordered stretches follow at residues 208 to 230 (EVKA…QDPV), 299 to 319 (SHGG…SHVA), 344 to 382 (TMGA…CTDS), 395 to 416 (SSSA…SPDA), and 517 to 546 (RRIQ…AYGQ). Residues 349–362 (RHPRTRPSRKHKRR) are compositionally biased toward basic residues. Positions 363-374 (VVDLRKPQKLDD) are enriched in basic and acidic residues.

This sequence belongs to the MDM34 family. As to quaternary structure, component of the ER-mitochondria encounter structure (ERMES) or MDM complex, composed of MMM1, MDM10, MDM12 and MDM34.

Its subcellular location is the mitochondrion outer membrane. Component of the ERMES/MDM complex, which serves as a molecular tether to connect the endoplasmic reticulum (ER) and mitochondria. Components of this complex are involved in the control of mitochondrial shape and protein biogenesis, and function in nonvesicular lipid trafficking between the ER and mitochondria. MDM34 is required for the interaction of the ER-resident membrane protein MMM1 and the outer mitochondrial membrane-resident beta-barrel protein MDM10. The protein is Mitochondrial distribution and morphology protein 34 of Arthroderma otae (strain ATCC MYA-4605 / CBS 113480) (Microsporum canis).